The following is a 70-amino-acid chain: uncharacterized protein (70 aa).

A helical membrane pass occupies residues 50–70 (INVVLVLIIALIIFILMLDGV).

It localises to the membrane. This is an uncharacterized protein from Dictyostelium discoideum (Social amoeba).